The chain runs to 588 residues: Pre-mRNA 3'-end-processing factor FIP1 (588 aa).

Positions 1-10 (MSAGEVERLV) are enriched in basic and acidic residues. 3 disordered regions span residues 1–81 (MSAG…EDDV), 223–291 (QGRT…ESPD), and 334–588 (VDNN…TPAE). Residues 1-96 (MSAGEVERLV…DIKTGAPQYG (96 aa)) are sufficient for interaction with PAPOLA. The interval 1–341 (MSAGEVERLV…TAVDNNFSKP (341 aa)) is necessary for stimulating PAPOLA activity. Composition is skewed to acidic residues over residues 19-40 (GDEE…EEEN) and 66-80 (TEDD…DEDD). A phosphoserine mark is found at Ser-70, Ser-72, and Ser-74. Residues 122–228 (KGVDLDAPGS…FKVQQGRTGN (107 aa)) are sufficient for interaction with CPSF4. Low complexity predominate over residues 259-270 (STSSQSQTSTAS). Positions 280–291 (WQDRYGRAESPD) are enriched in basic and acidic residues. Ser-289 is subject to Phosphoserine. Residues 340–398 (KPPPFFPPGAPPTHLPPPPFLPPPPTVSTAPPLIPPPGIPITVPPPGFPPPPGAPPPSL) are compositionally biased toward pro residues. Phosphotyrosine is present on Tyr-420. The interval 437 to 588 (SLVDTSKQWD…QESTEATPAE (152 aa)) is sufficient for interaction with CPSF1 and CSTF3. Residues 448–486 (YARREKDRDRERDRDRERDRDRDRERERTRERERERDHS) are compositionally biased toward basic and acidic residues. The interval 451–484 (REKDRDRERDRDRERDRDRDRERERTRERERERD) is arg/Asp/Glu-rich domain. Ser-486 carries the phosphoserine modification. Thr-488 carries the phosphothreonine modification. Residues Ser-490 and Ser-494 each carry the phosphoserine modification. The span at 495-522 (DEERYRYREYAERGYERHRASREKEERH) shows a compositional bias: basic and acidic residues. The span at 536–545 (KSSRSNSRRR) shows a compositional bias: basic residues. Ser-548 bears the Phosphoserine mark. The span at 554 to 564 (HRRHKHKKSKR) shows a compositional bias: basic residues.

It belongs to the FIP1 family. As to quaternary structure, component of the cleavage and polyadenylation specificity factor (CPSF) complex, composed of CPSF1, CPSF2, CPSF3, CPSF4 and FIP1L1. Found in a complex with CPSF1, FIP1L1 and PAPOLA. Interacts with CPSF1, CPSF4, CSTF2 and CSTF3. Interacts with AHCYL1 (when phosphorylated); the interaction is direct and associates AHCYL1 with the CPSF complex and RNA. Interacts with PAPOLA; the interaction seems to be increased by the interaction with AHCYL1. Interacts with NUDT21/CPSF5; this interaction occurs in a RNA sequence-specific manner. Interacts (preferentially via unphosphorylated form and Arg/Glu/Asp-rich domain) with CPSF6 (via Arg/Ser-rich domain); this interaction mediates, at least in part, the interaction between the CFIm and CPSF complexes and may be inhibited by CPSF6 hyper-phosphorylation. Interacts (preferentially via unphosphorylated form and Arg/Asp/Glu-rich domain) with CPSF7 (via Arg/Ser-rich domain); this interaction mediates, at least in part, the interaction between the CFIm and CPSF complexes and may be inhibited by CPSF7 hyper-phosphorylation.

It is found in the nucleus. Functionally, component of the cleavage and polyadenylation specificity factor (CPSF) complex that plays a key role in pre-mRNA 3'-end formation, recognizing the AAUAAA signal sequence and interacting with poly(A) polymerase and other factors to bring about cleavage and poly(A) addition. FIP1L1 contributes to poly(A) site recognition and stimulates poly(A) addition. Binds to U-rich RNA sequence elements surrounding the poly(A) site. May act to tether poly(A) polymerase to the CPSF complex. The chain is Pre-mRNA 3'-end-processing factor FIP1 (FIP1L1) from Pongo abelii (Sumatran orangutan).